A 1380-amino-acid chain; its full sequence is DNA-directed RNA polymerase subunit beta (1380 aa).

This sequence belongs to the RNA polymerase beta chain family. In terms of assembly, the RNAP catalytic core consists of 2 alpha, 1 beta, 1 beta' and 1 omega subunit. When a sigma factor is associated with the core the holoenzyme is formed, which can initiate transcription.

The enzyme catalyses RNA(n) + a ribonucleoside 5'-triphosphate = RNA(n+1) + diphosphate. DNA-dependent RNA polymerase catalyzes the transcription of DNA into RNA using the four ribonucleoside triphosphates as substrates. This chain is DNA-directed RNA polymerase subunit beta, found in Ehrlichia ruminantium (strain Gardel).